The primary structure comprises 217 residues: Peptide methionine sulfoxide reductase MsrA (217 aa).

Residue Cys56 is part of the active site.

This sequence belongs to the MsrA Met sulfoxide reductase family.

The catalysed reaction is L-methionyl-[protein] + [thioredoxin]-disulfide + H2O = L-methionyl-(S)-S-oxide-[protein] + [thioredoxin]-dithiol. It catalyses the reaction [thioredoxin]-disulfide + L-methionine + H2O = L-methionine (S)-S-oxide + [thioredoxin]-dithiol. Its function is as follows. Has an important function as a repair enzyme for proteins that have been inactivated by oxidation. Catalyzes the reversible oxidation-reduction of methionine sulfoxide in proteins to methionine. The protein is Peptide methionine sulfoxide reductase MsrA of Rippkaea orientalis (strain PCC 8801 / RF-1) (Cyanothece sp. (strain PCC 8801)).